The primary structure comprises 386 residues: GTPase Obg (386 aa).

Residues 1 to 159 (MKFVDEASIL…RELLLELMLL (159 aa)) enclose the Obg domain. Residues 127–147 (NTRFKSSVNRTPRQKTNGTPG) form a disordered region. Residues 129–145 (RFKSSVNRTPRQKTNGT) are compositionally biased toward polar residues. Residues 160–333 (ADVGMLGMPN…LCWDVMTFII (174 aa)) enclose the OBG-type G domain. GTP contacts are provided by residues 166 to 173 (GMPNAGKS), 191 to 195 (FTTLV), 213 to 216 (DIPG), 283 to 286 (NKID), and 314 to 316 (SAA). The Mg(2+) site is built by S173 and T193.

It belongs to the TRAFAC class OBG-HflX-like GTPase superfamily. OBG GTPase family. Monomer. It depends on Mg(2+) as a cofactor.

The protein resides in the cytoplasm. In terms of biological role, an essential GTPase which binds GTP, GDP and possibly (p)ppGpp with moderate affinity, with high nucleotide exchange rates and a fairly low GTP hydrolysis rate. Plays a role in control of the cell cycle, stress response, ribosome biogenesis and in those bacteria that undergo differentiation, in morphogenesis control. This chain is GTPase Obg, found in Escherichia coli (strain UTI89 / UPEC).